Here is an 82-residue protein sequence, read N- to C-terminus: uncharacterized protein (82 aa).

This is an uncharacterized protein from Sinorhizobium fredii (strain NBRC 101917 / NGR234).